The chain runs to 408 residues: Phosphopentomutase (408 aa).

Mn(2+)-binding residues include Asp-10, Asp-307, His-312, Asp-348, His-349, and His-360.

It belongs to the phosphopentomutase family. Mn(2+) serves as cofactor.

The protein resides in the cytoplasm. It catalyses the reaction 2-deoxy-alpha-D-ribose 1-phosphate = 2-deoxy-D-ribose 5-phosphate. It carries out the reaction alpha-D-ribose 1-phosphate = D-ribose 5-phosphate. It participates in carbohydrate degradation; 2-deoxy-D-ribose 1-phosphate degradation; D-glyceraldehyde 3-phosphate and acetaldehyde from 2-deoxy-alpha-D-ribose 1-phosphate: step 1/2. Isomerase that catalyzes the conversion of deoxy-ribose 1-phosphate (dRib-1-P) and ribose 1-phosphate (Rib-1-P) to deoxy-ribose 5-phosphate (dRib-5-P) and ribose 5-phosphate (Rib-5-P), respectively. This chain is Phosphopentomutase, found in Buchnera aphidicola subsp. Baizongia pistaciae (strain Bp).